The following is a 327-amino-acid chain: Tetraacyldisaccharide 4'-kinase (327 aa).

52–59 is a binding site for ATP; it reads TLGGAGKT.

It belongs to the LpxK family.

It carries out the reaction a lipid A disaccharide + ATP = a lipid IVA + ADP + H(+). The protein operates within glycolipid biosynthesis; lipid IV(A) biosynthesis; lipid IV(A) from (3R)-3-hydroxytetradecanoyl-[acyl-carrier-protein] and UDP-N-acetyl-alpha-D-glucosamine: step 6/6. Transfers the gamma-phosphate of ATP to the 4'-position of a tetraacyldisaccharide 1-phosphate intermediate (termed DS-1-P) to form tetraacyldisaccharide 1,4'-bis-phosphate (lipid IVA). The protein is Tetraacyldisaccharide 4'-kinase of Methylorubrum populi (strain ATCC BAA-705 / NCIMB 13946 / BJ001) (Methylobacterium populi).